We begin with the raw amino-acid sequence, 143 residues long: Large-conductance mechanosensitive channel (143 aa).

Transmembrane regions (helical) follow at residues 16–36 and 84–104; these read VIDL…VTAL and INTV…VKLI.

This sequence belongs to the MscL family. Homopentamer.

Its subcellular location is the cell inner membrane. Channel that opens in response to stretch forces in the membrane lipid bilayer. May participate in the regulation of osmotic pressure changes within the cell. This is Large-conductance mechanosensitive channel from Xanthomonas campestris pv. campestris (strain 8004).